The sequence spans 317 residues: Aspartate carbamoyltransferase catalytic subunit (317 aa).

Carbamoyl phosphate is bound by residues Arg64 and Thr65. Lys92 is a binding site for L-aspartate. Residues Arg114, His144, and Gln147 each coordinate carbamoyl phosphate. Arg177 and Arg232 together coordinate L-aspartate. Residues Gly273 and Pro274 each contribute to the carbamoyl phosphate site.

Belongs to the aspartate/ornithine carbamoyltransferase superfamily. ATCase family. As to quaternary structure, heterododecamer (2C3:3R2) of six catalytic PyrB chains organized as two trimers (C3), and six regulatory PyrI chains organized as three dimers (R2).

It carries out the reaction carbamoyl phosphate + L-aspartate = N-carbamoyl-L-aspartate + phosphate + H(+). It participates in pyrimidine metabolism; UMP biosynthesis via de novo pathway; (S)-dihydroorotate from bicarbonate: step 2/3. Its function is as follows. Catalyzes the condensation of carbamoyl phosphate and aspartate to form carbamoyl aspartate and inorganic phosphate, the committed step in the de novo pyrimidine nucleotide biosynthesis pathway. This Thiobacillus denitrificans (strain ATCC 25259 / T1) protein is Aspartate carbamoyltransferase catalytic subunit.